Consider the following 357-residue polypeptide: 3-isopropylmalate dehydrogenase (357 aa).

76–89 (GPQWDTIDPSLRPE) provides a ligand contact to NAD(+). Substrate-binding residues include R96, R106, R134, and D224. Residues D224, D248, and D252 each contribute to the Mg(2+) site. Residue 282 to 294 (GSAPDIAGKGIAN) participates in NAD(+) binding.

The protein belongs to the isocitrate and isopropylmalate dehydrogenases family. LeuB type 1 subfamily. As to quaternary structure, homodimer. The cofactor is Mg(2+). Mn(2+) serves as cofactor.

It localises to the cytoplasm. The enzyme catalyses (2R,3S)-3-isopropylmalate + NAD(+) = 4-methyl-2-oxopentanoate + CO2 + NADH. Its pathway is amino-acid biosynthesis; L-leucine biosynthesis; L-leucine from 3-methyl-2-oxobutanoate: step 3/4. Catalyzes the oxidation of 3-carboxy-2-hydroxy-4-methylpentanoate (3-isopropylmalate) to 3-carboxy-4-methyl-2-oxopentanoate. The product decarboxylates to 4-methyl-2 oxopentanoate. This chain is 3-isopropylmalate dehydrogenase, found in Xanthomonas euvesicatoria pv. vesicatoria (strain 85-10) (Xanthomonas campestris pv. vesicatoria).